The primary structure comprises 373 residues: Carbamoyl phosphate synthase small chain (373 aa).

The CPSase stretch occupies residues 1–179 (MSGKAQLVLE…AYIVEPEGPP (179 aa)). Residues Ser-47, Gly-230, and Gly-232 each coordinate L-glutamine. Residues 182–373 (TVAALDLGIK…QFIELMEGDR (192 aa)) enclose the Glutamine amidotransferase type-1 domain. The active-site Nucleophile is the Cys-258. Phe-259, Gln-262, Asn-300, Gly-302, and Phe-303 together coordinate L-glutamine. Active-site residues include His-348 and Glu-350.

This sequence belongs to the CarA family. In terms of assembly, composed of two chains; the small (or glutamine) chain promotes the hydrolysis of glutamine to ammonia, which is used by the large (or ammonia) chain to synthesize carbamoyl phosphate. Tetramer of heterodimers (alpha,beta)4.

It catalyses the reaction hydrogencarbonate + L-glutamine + 2 ATP + H2O = carbamoyl phosphate + L-glutamate + 2 ADP + phosphate + 2 H(+). The catalysed reaction is L-glutamine + H2O = L-glutamate + NH4(+). It functions in the pathway amino-acid biosynthesis; L-arginine biosynthesis; carbamoyl phosphate from bicarbonate: step 1/1. The protein operates within pyrimidine metabolism; UMP biosynthesis via de novo pathway; (S)-dihydroorotate from bicarbonate: step 1/3. Its function is as follows. Small subunit of the glutamine-dependent carbamoyl phosphate synthetase (CPSase). CPSase catalyzes the formation of carbamoyl phosphate from the ammonia moiety of glutamine, carbonate, and phosphate donated by ATP, constituting the first step of 2 biosynthetic pathways, one leading to arginine and/or urea and the other to pyrimidine nucleotides. The small subunit (glutamine amidotransferase) binds and cleaves glutamine to supply the large subunit with the substrate ammonia. This is Carbamoyl phosphate synthase small chain from Mycolicibacterium paratuberculosis (strain ATCC BAA-968 / K-10) (Mycobacterium paratuberculosis).